A 358-amino-acid polypeptide reads, in one-letter code: Peptide chain release factor 1 (358 aa).

At Q233 the chain carries N5-methylglutamine.

This sequence belongs to the prokaryotic/mitochondrial release factor family. Methylated by PrmC. Methylation increases the termination efficiency of RF1.

It localises to the cytoplasm. Peptide chain release factor 1 directs the termination of translation in response to the peptide chain termination codons UAG and UAA. The polypeptide is Peptide chain release factor 1 (Staphylococcus epidermidis (strain ATCC 35984 / DSM 28319 / BCRC 17069 / CCUG 31568 / BM 3577 / RP62A)).